The sequence spans 378 residues: Apolipoprotein A-IV (378 aa).

The first 20 residues, 1–20 (MFLKAVVLTLSLVAITGARA), serve as a signal peptide directing secretion. 13 tandem repeats follow at residues 33-54 (DYFS…QSEL), 60-81 (SVTK…RNSW), 82-98 (EHSR…RQVG), 110-130 (PNCD…QAVG), 131-152 (PYAE…NQLT), 153-174 (SHAQ…SSLT), 175-196 (PFAD…GHLT), 197-218 (PYTD…RSLA), 219-240 (PYAQ…FQMK), 241-262 (KNAE…QRLA), 263-280 (PVAE…AGLH), 281-302 (KSLA…RNVG), and 303-324 (PYGE…QKLG). A 13 X 22 AA approximate tandem repeats region spans residues 33 to 324 (DYFSQLSNNA…QVEELRQKLG (292 aa)). A disordered region spans residues 354 to 378 (EKESQDTPVALPKQEQEQSAVPLES).

This sequence belongs to the apolipoprotein A1/A4/E family. In terms of assembly, homodimer.

It is found in the secreted. Functionally, may have a role in chylomicrons and VLDL secretion and catabolism. Required for efficient activation of lipoprotein lipase by ApoC-II; potent activator of LCAT. Apoa-IV is a major component of HDL and chylomicrons. The chain is Apolipoprotein A-IV from Canis lupus familiaris (Dog).